Consider the following 336-residue polypeptide: MSILITGGAGYIGSHTVLTLLEQGRNVVVLDNLINSSAESLARVSKICGRKPNFYHGDILDRSCLKLIFSSHKIDSVIHFAGLKSVGESVEKPIEYYQNNVVGSITLLEEMCLANVKKLIFSSSATVYGEPEFVPLTEKARIGGTTNPYGTSKVMVEQILKDFSLAHPDYSITALRYFNPVGAHPSGLIGEDPNGKPNNLLPFITQVAIGKLSKLLVYGNDYDTPDGSGIRDYIHVMDLAEGHLSTLINLTSGFRIYNLGTGVGYSVLHMIKEFERITGKNIPFDIVSRRPGDIAECWASPELAHLELGWYAKRTLVDMLQDAWKWQKMNPNGYNC.

NAD(+) contacts are provided by residues 11 to 12 (YI), 31 to 36 (DNLINS), 58 to 59 (DI), 80 to 84 (FAGLK), N99, S124, Y149, K153, and F178. Residues S124 and Y149 each contribute to the substrate site. Y149 (proton acceptor) is an active-site residue. Residues N179, 199 to 200 (NL), 216 to 218 (LVY), R231, and 290 to 293 (RPGD) each bind substrate.

This sequence belongs to the NAD(P)-dependent epimerase/dehydratase family. In terms of assembly, homodimer. It depends on NAD(+) as a cofactor.

It catalyses the reaction UDP-alpha-D-glucose = UDP-alpha-D-galactose. Its pathway is carbohydrate metabolism; galactose metabolism. Its function is as follows. Involved in the metabolism of galactose. Catalyzes the conversion of UDP-galactose (UDP-Gal) to UDP-glucose (UDP-Glc) through a mechanism involving the transient reduction of NAD. The polypeptide is UDP-glucose 4-epimerase (galE) (Yersinia enterocolitica).